The chain runs to 317 residues: 4-hydroxy-3-methylbut-2-enyl diphosphate reductase (317 aa).

Cysteine 12 contacts [4Fe-4S] cluster. (2E)-4-hydroxy-3-methylbut-2-enyl diphosphate contacts are provided by histidine 41 and histidine 74. Residues histidine 41 and histidine 74 each coordinate dimethylallyl diphosphate. Isopentenyl diphosphate contacts are provided by histidine 41 and histidine 74. Cysteine 96 contributes to the [4Fe-4S] cluster binding site. Residue histidine 124 coordinates (2E)-4-hydroxy-3-methylbut-2-enyl diphosphate. Position 124 (histidine 124) interacts with dimethylallyl diphosphate. Histidine 124 is an isopentenyl diphosphate binding site. The Proton donor role is filled by glutamate 126. Residue threonine 169 coordinates (2E)-4-hydroxy-3-methylbut-2-enyl diphosphate. A [4Fe-4S] cluster-binding site is contributed by cysteine 199. (2E)-4-hydroxy-3-methylbut-2-enyl diphosphate is bound by residues serine 227, serine 228, asparagine 229, and serine 271. Serine 227, serine 228, asparagine 229, and serine 271 together coordinate dimethylallyl diphosphate. Residues serine 227, serine 228, asparagine 229, and serine 271 each coordinate isopentenyl diphosphate.

This sequence belongs to the IspH family. It depends on [4Fe-4S] cluster as a cofactor.

It catalyses the reaction isopentenyl diphosphate + 2 oxidized [2Fe-2S]-[ferredoxin] + H2O = (2E)-4-hydroxy-3-methylbut-2-enyl diphosphate + 2 reduced [2Fe-2S]-[ferredoxin] + 2 H(+). The enzyme catalyses dimethylallyl diphosphate + 2 oxidized [2Fe-2S]-[ferredoxin] + H2O = (2E)-4-hydroxy-3-methylbut-2-enyl diphosphate + 2 reduced [2Fe-2S]-[ferredoxin] + 2 H(+). Its pathway is isoprenoid biosynthesis; dimethylallyl diphosphate biosynthesis; dimethylallyl diphosphate from (2E)-4-hydroxy-3-methylbutenyl diphosphate: step 1/1. It functions in the pathway isoprenoid biosynthesis; isopentenyl diphosphate biosynthesis via DXP pathway; isopentenyl diphosphate from 1-deoxy-D-xylulose 5-phosphate: step 6/6. In terms of biological role, catalyzes the conversion of 1-hydroxy-2-methyl-2-(E)-butenyl 4-diphosphate (HMBPP) into a mixture of isopentenyl diphosphate (IPP) and dimethylallyl diphosphate (DMAPP). Acts in the terminal step of the DOXP/MEP pathway for isoprenoid precursor biosynthesis. The sequence is that of 4-hydroxy-3-methylbut-2-enyl diphosphate reductase from Vibrio parahaemolyticus serotype O3:K6 (strain RIMD 2210633).